The primary structure comprises 133 residues: MTAMKEDNAALITLKKNNDQEKLRVHKLTDASSNSADGFVINKAKNGGPLNKKSLVNNEQHIKKAVSPGRVRKHKTTTSSTKSRTKSKKKDASESKVQRENKGSFYQGAIFGSFLGAAVTTVLSNLAVKALQN.

Over 1 to 104 (MTAMKEDNAA…SKVQRENKGS (104 aa)) the chain is Nuclear. Positions 36-100 (ADGFVINKAK…DASESKVQRE (65 aa)) are disordered. The short motif at 69-75 (GRVRKHK) is the Bipartite nuclear localization signal element. Residues 90–100 (KDASESKVQRE) show a composition bias toward basic and acidic residues. A helical transmembrane segment spans residues 105–127 (FYQGAIFGSFLGAAVTTVLSNLA). The Perinuclear space segment spans residues 128 to 133 (VKALQN).

In terms of assembly, interacts with KAR5.

It is found in the nucleus outer membrane. It localises to the cytoplasm. The protein resides in the cytoskeleton. The protein localises to the microtubule organizing center. Its subcellular location is the spindle pole body. Its function is as follows. Required for the fusion of nuclear envelopes during mating, ensuring proper karyogamy. Plays a role in the initiation of outer nuclear envelope fusion. This Saccharomyces cerevisiae (strain ATCC 204508 / S288c) (Baker's yeast) protein is Pheromone-regulated membrane protein 3 (PRM3).